Reading from the N-terminus, the 121-residue chain is SPbeta prophage-derived uncharacterized protein YorW (121 aa).

The chain is SPbeta prophage-derived uncharacterized protein YorW (yorW) from Bacillus subtilis (strain 168).